The chain runs to 225 residues: Histone H1 (225 aa).

Residues 1-20 form a disordered region; the sequence is MGPKATSGTRGRGKKVGTKT. The 72-residue stretch at 23 to 94 folds into the H15 domain; it reads PLPKYKDLIV…GPAGSIKLLK (72 aa). Residues 95-147 are disordered; the sequence is KAAQPKPEEAKRAAKPAKRVVKAAKPAKAKPAKAAKAAKPAKPVKAAKAASAV. A compositionally biased stretch (basic residues) spans 107–127; it reads AAKPAKRVVKAAKPAKAKPAK. The span at 128-147 shows a compositional bias: low complexity; sequence AAKAAKPAKPVKAAKAASAV.

It belongs to the histone H1/H5 family.

It localises to the nucleus. The protein localises to the chromosome. In terms of biological role, could act as an H1-type linker histone. This chain is Histone H1 (HHOA), found in Eremothecium gossypii (strain ATCC 10895 / CBS 109.51 / FGSC 9923 / NRRL Y-1056) (Yeast).